Here is a 259-residue protein sequence, read N- to C-terminus: Insulin-like growth factor-binding protein 4 (259 aa).

Residues 1-22 (MLPLCLVAALLLSASGPRPSLG) form the signal peptide. One can recognise an IGFBP N-terminal domain in the interval 24-104 (EAIHCPPCSE…MHGQGLCMEL (81 aa)). Cystine bridges form between C28–C54, C31–C56, C39–C57, C45–C60, C68–C81, and C75–C101. Positions 115-136 (QPSDKDEGDHPNNSFSPCSPQD) are disordered. A glycan (N-linked (GlcNAc...) asparagine) is linked at N126. Disulfide bonds link C132–C139, C175–C205, C216–C227, and C229–C250. The 79-residue stretch at 172-250 (QGSCQSELHR…GLEPKGELDC (79 aa)) folds into the Thyroglobulin type-1 domain. Position 256 is a phosphoserine (S256).

As to quaternary structure, binds IGF2 more than IGF1.

It is found in the secreted. Functionally, IGF-binding proteins prolong the half-life of the IGFs and have been shown to either inhibit or stimulate the growth promoting effects of the IGFs on cell culture. They alter the interaction of IGFs with their cell surface receptors. The chain is Insulin-like growth factor-binding protein 4 (IGFBP4) from Sus scrofa (Pig).